Here is a 489-residue protein sequence, read N- to C-terminus: MVAFSAILQTALGLSAANDLTSLFGPYLSPQAEILYGNDTNFYAQLQQRWTDYKAPSYGAGAIKPATAKDVQNVVKIANANSIPFFVTGGGHGISDYHNFDGLSIDMGKFNTVERNAAGDRLTIGGAVKIHQLTKPLAEWGKELPLGSCACVGVVGATLGGGIGSLHGLRGLLVDYLEEVEVVTASGDLIKASETEHKDLFWALRGAGSNYGIVTSATYRLPEVTNKGVYVNADYVYPVSANQSFFEVLEQFDNTLPPRLAITGASFFDRVNNKPVIAVNAVFFGPLEEALPHLQPFESLQPEMKNVSSIPAEQMMDAAFFSFFGMDNGACTPNQHINIYTVALRQIHAPTFQSFYSKLVDFWNANPTYQGRLLIQRYSNEGPMAVPDDATAYAYRDVKTYMNIEGFYADSALDDAVNEFATLGRQEFVETSGFDQLAVYSNYARGDEGPVAWYGERKLPKLSALKRKWDPEQRFSVNNPVPLHWRTEL.

A signal peptide spans 1–17 (MVAFSAILQTALGLSAA). The N-linked (GlcNAc...) asparagine glycan is linked to N38. Positions 55 to 224 (APSYGAGAIK…TSATYRLPEV (170 aa)) constitute an FAD-binding PCMH-type domain. N-linked (GlcNAc...) asparagine glycans are attached at residues N242 and N306.

This sequence belongs to the oxygen-dependent FAD-linked oxidoreductase family. The cofactor is FAD.

Its pathway is secondary metabolite biosynthesis. FAD-linked oxidoreductase; part of the gene cluster that mediates the biosynthesis of azaterrilone A and other azaphilones, a class of fungal metabolites characterized by a highly oxygenated pyrano-quinone bicyclic core and exhibiting a broad range of bioactivities. The first step of the pathway begins with the non-reducing polyketide synthase tazA that assembles one acetyl-CoA starter unit, five malonyl-CoA units, and catalyzes a series of Claisen condensations, methylation, PT-mediated cyclization, and finally releases the first hexaketide precursor through the R-domain. The tazA product then undergoes reduction on its terminal ketone and the following pyran-ring formation by yet undetermined enzyme(s). Dehydration and enoyl reduction, possibly involving the trans-enoyl reductase tazE leads to the next intermediate. TazD is predicted as an acetyltransferase and might catalyze the acetylation steps leading to the synthesis of azaterrilone A. Azaterrilone A is not the final product of the taz pathway and both the highly reducing polyketide synthase tazB and the dual enzyme tazHJ catalyze late steps of the pathway, leading to the production of the 2 final stereoisomers that contain additional polyketide modification whose structures have still to be determined. The chain is FAD-linked oxidoreductase tazG from Aspergillus terreus (strain NIH 2624 / FGSC A1156).